The following is a 256-amino-acid chain: Adenosylcobinamide-GDP ribazoletransferase (256 aa).

A run of 6 helical transmembrane segments spans residues 40-60 (YFPL…WLVL), 64-84 (PAQG…TGAF), 114-134 (IGAF…QLLS), 143-163 (ILVA…SHLL), 194-214 (VVPL…GLIL), and 234-254 (CLGM…LAWM).

This sequence belongs to the CobS family. It depends on Mg(2+) as a cofactor.

The protein localises to the cell inner membrane. The enzyme catalyses alpha-ribazole + adenosylcob(III)inamide-GDP = adenosylcob(III)alamin + GMP + H(+). It carries out the reaction alpha-ribazole 5'-phosphate + adenosylcob(III)inamide-GDP = adenosylcob(III)alamin 5'-phosphate + GMP + H(+). Its pathway is cofactor biosynthesis; adenosylcobalamin biosynthesis; adenosylcobalamin from cob(II)yrinate a,c-diamide: step 7/7. Its function is as follows. Joins adenosylcobinamide-GDP and alpha-ribazole to generate adenosylcobalamin (Ado-cobalamin). Also synthesizes adenosylcobalamin 5'-phosphate from adenosylcobinamide-GDP and alpha-ribazole 5'-phosphate. The chain is Adenosylcobinamide-GDP ribazoletransferase from Ralstonia pickettii (strain 12J).